The primary structure comprises 213 residues: Thymidylate kinase (213 aa).

7–14 provides a ligand contact to ATP; the sequence is GMDGSGKT.

The protein belongs to the thymidylate kinase family.

The enzyme catalyses dTMP + ATP = dTDP + ADP. In terms of biological role, phosphorylation of dTMP to form dTDP in both de novo and salvage pathways of dTTP synthesis. This chain is Thymidylate kinase, found in Mycoplasma capricolum subsp. capricolum (strain California kid / ATCC 27343 / NCTC 10154).